The primary structure comprises 250 residues: 2,3-bisphosphoglycerate-dependent phosphoglycerate mutase (250 aa).

Substrate-binding positions include 10–17 (RHGESQWN), 23–24 (TG), Arg62, 89–92 (ERHY), Lys100, 116–117 (RR), and 185–186 (GN). Residue His11 is the Tele-phosphohistidine intermediate of the active site. Glu89 functions as the Proton donor/acceptor in the catalytic mechanism.

This sequence belongs to the phosphoglycerate mutase family. BPG-dependent PGAM subfamily. As to quaternary structure, homodimer.

It carries out the reaction (2R)-2-phosphoglycerate = (2R)-3-phosphoglycerate. It participates in carbohydrate degradation; glycolysis; pyruvate from D-glyceraldehyde 3-phosphate: step 3/5. Its function is as follows. Catalyzes the interconversion of 2-phosphoglycerate and 3-phosphoglycerate. The polypeptide is 2,3-bisphosphoglycerate-dependent phosphoglycerate mutase (Pectobacterium atrosepticum (strain SCRI 1043 / ATCC BAA-672) (Erwinia carotovora subsp. atroseptica)).